We begin with the raw amino-acid sequence, 241 residues long: Pyridoxal phosphate phosphatase PHOSPHO2 (241 aa).

The active-site Nucleophile is the D8. Residues D8 and D10 each coordinate Mg(2+). Residue D10 is the Proton donor of the active site. D19 and D99 together coordinate substrate. Mg(2+) is bound at residue D179.

Belongs to the HAD-like hydrolase superfamily. PHOSPHO family. Mg(2+) is required as a cofactor.

The catalysed reaction is pyridoxal 5'-phosphate + H2O = pyridoxal + phosphate. Its function is as follows. Phosphatase that has high activity toward pyridoxal 5'-phosphate (PLP). Also active at much lower level toward pyrophosphate, phosphoethanolamine (PEA), phosphocholine (PCho), phospho-l-tyrosine, fructose-6-phosphate, p-nitrophenyl phosphate, and h-glycerophosphate. This chain is Pyridoxal phosphate phosphatase PHOSPHO2 (PHOSPHO2), found in Homo sapiens (Human).